The primary structure comprises 590 residues: O-fucosyltransferase 2 (590 aa).

Positions 1–16 (MGQERPNDEERPESRD) are enriched in basic and acidic residues. Positions 1-26 (MGQERPNDEERPESRDLGVYGCSPPH) are disordered. Residues 67-87 (TAIGVMAILGFFCLVNWFMLS) form a helical; Signal-anchor for type II membrane protein membrane-spanning segment. N-linked (GlcNAc...) asparagine glycosylation is present at N125. A substrate-binding site is contributed by 365-367 (HLR). 2 N-linked (GlcNAc...) asparagine glycosylation sites follow: N485 and N546.

This sequence belongs to the glycosyltransferase GT106 family.

It localises to the membrane. The protein operates within glycan metabolism. The sequence is that of O-fucosyltransferase 2 from Arabidopsis thaliana (Mouse-ear cress).